Here is a 288-residue protein sequence, read N- to C-terminus: Diaminopimelate epimerase (288 aa).

Substrate contacts are provided by Asn-17, Gln-47, and Asn-67. Cys-76 serves as the catalytic Proton donor. Substrate contacts are provided by residues 77–78 (GN), Asn-164, Asn-197, and 215–216 (ER). Cys-224 acts as the Proton acceptor in catalysis. Substrate is bound at residue 225 to 226 (GS).

This sequence belongs to the diaminopimelate epimerase family. In terms of assembly, homodimer.

It is found in the cytoplasm. It catalyses the reaction (2S,6S)-2,6-diaminopimelate = meso-2,6-diaminopimelate. It participates in amino-acid biosynthesis; L-lysine biosynthesis via DAP pathway; DL-2,6-diaminopimelate from LL-2,6-diaminopimelate: step 1/1. Functionally, catalyzes the stereoinversion of LL-2,6-diaminopimelate (L,L-DAP) to meso-diaminopimelate (meso-DAP), a precursor of L-lysine and an essential component of the bacterial peptidoglycan. This is Diaminopimelate epimerase from Rhodopseudomonas palustris (strain BisA53).